The following is a 470-amino-acid chain: V-type proton ATPase subunit S1 (470 aa).

The N-terminal stretch at 1-41 (MMAAMATARVRMGPRCAQALWRMPWLPVFLSLAAAAAAAAA) is a signal peptide. The propeptide occupies 42 to 231 (EQQVPLVLWS…TAVRPSRVAR (190 aa)). Topologically, residues 42 to 419 (EQQVPLVLWS…EQFSYASDCA (378 aa)) are lumenal. Residues Asn170, Asn261, Asn273, Asn296, Asn303, Asn350, and Asn357 are each glycosylated (N-linked (GlcNAc...) asparagine). Residues Cys371 and Cys418 are joined by a disulfide bond. A helical transmembrane segment spans residues 420-440 (SFFSPGIWMGLLTSLFMLFIF). Residues 441–470 (TYGLHMILSLKTMDRFDDHKGPTISLTQIV) lie on the Cytoplasmic side of the membrane. Ser465 bears the Phosphoserine mark.

The protein belongs to the vacuolar ATPase subunit S1 family. Accessory component of the multisubunit proton-transporting vacuolar (V)-ATPase protein pump. Interacts (via N-terminus) with ATP6AP2 (via N-terminus). Interacts with RNASEK. Interacts with TMEM106B (via C-terminus). In terms of processing, N-glycosylated. As to expression, widely expressed, with highest levels in brain and lowest in liver and duodenum.

The protein localises to the endoplasmic reticulum membrane. It localises to the endoplasmic reticulum-Golgi intermediate compartment membrane. Its subcellular location is the cytoplasmic vesicle. It is found in the secretory vesicle. The protein resides in the synaptic vesicle membrane. The protein localises to the clathrin-coated vesicle membrane. Its function is as follows. Accessory subunit of the proton-transporting vacuolar (V)-ATPase protein pump, which is required for luminal acidification of secretory vesicles. Guides the V-type ATPase into specialized subcellular compartments, such as neuroendocrine regulated secretory vesicles or the ruffled border of the osteoclast, thereby regulating its activity. Involved in membrane trafficking and Ca(2+)-dependent membrane fusion. May play a role in the assembly of the V-type ATPase complex. In aerobic conditions, involved in intracellular iron homeostasis, thus triggering the activity of Fe(2+) prolyl hydroxylase (PHD) enzymes, and leading to HIF1A hydroxylation and subsequent proteasomal degradation. In islets of Langerhans cells, may regulate the acidification of dense-core secretory granules. This chain is V-type proton ATPase subunit S1 (ATP6AP1), found in Homo sapiens (Human).